The following is a 450-amino-acid chain: Tubulin alpha-1 chain (450 aa).

Positions 11, 71, 144, 145, 179, 206, and 228 each coordinate GTP. Glu71 contacts Mg(2+). Glu254 is a catalytic residue.

Belongs to the tubulin family. As to quaternary structure, dimer of alpha and beta chains. A typical microtubule is a hollow water-filled tube with an outer diameter of 25 nm and an inner diameter of 15 nM. Alpha-beta heterodimers associate head-to-tail to form protofilaments running lengthwise along the microtubule wall with the beta-tubulin subunit facing the microtubule plus end conferring a structural polarity. Microtubules usually have 13 protofilaments but different protofilament numbers can be found in some organisms and specialized cells. Requires Mg(2+) as cofactor. In terms of processing, undergoes a tyrosination/detyrosination cycle, the cyclic removal and re-addition of a C-terminal tyrosine residue by the enzymes tubulin tyrosine carboxypeptidase (TTCP) and tubulin tyrosine ligase (TTL), respectively.

It is found in the cytoplasm. It localises to the cytoskeleton. It catalyses the reaction GTP + H2O = GDP + phosphate + H(+). Functionally, tubulin is the major constituent of microtubules, a cylinder consisting of laterally associated linear protofilaments composed of alpha- and beta-tubulin heterodimers. Microtubules grow by the addition of GTP-tubulin dimers to the microtubule end, where a stabilizing cap forms. Below the cap, tubulin dimers are in GDP-bound state, owing to GTPase activity of alpha-tubulin. The protein is Tubulin alpha-1 chain (TUBA1) of Hordeum vulgare (Barley).